Consider the following 252-residue polypeptide: MERLLIVNADDFGLSKGQNYGIIEACRNGIVTSTTALVNGQAIDHAVQLSRDEPSLAIGMHFVLTMGKPLTVMPGLTRDGVLGKWIWQLAEEDALPLEEITQELASQYLRFIELFGRKPTHLDSHHHVHMFPQIFPIVAKFAAEEGIALRIDRQPLSNDGDLPANLRSSQGFSSAFYGEEISETLFLQVLDDSSHRGERSLEVMCHPAFVDNTIRQSAYCFPRLTELDVLTSASLKYAIAERGYLLGSYHDV.

Residues His61 and His125 each contribute to the Mg(2+) site.

It belongs to the YdjC deacetylase family. ChbG subfamily. As to quaternary structure, homodimer. Mg(2+) serves as cofactor.

Its subcellular location is the cytoplasm. The catalysed reaction is N,N'-diacetylchitobiose + H2O = N-acetyl-beta-D-glucosaminyl-(1-&gt;4)-D-glucosamine + acetate. It catalyses the reaction diacetylchitobiose-6'-phosphate + H2O = N'-monoacetylchitobiose-6'-phosphate + acetate. The protein operates within glycan degradation; chitin degradation. Functionally, involved in the degradation of chitin. ChbG is essential for growth on the acetylated chitooligosaccharides chitobiose and chitotriose but is dispensable for growth on cellobiose and chitosan dimer, the deacetylated form of chitobiose. Deacetylation of chitobiose-6-P and chitotriose-6-P is necessary for both the activation of the chb promoter by the regulatory protein ChbR and the hydrolysis of phosphorylated beta-glucosides by the phospho-beta-glucosidase ChbF. Catalyzes the removal of only one acetyl group from chitobiose-6-P to yield monoacetylchitobiose-6-P, the inducer of ChbR and the substrate of ChbF. The protein is Chitooligosaccharide deacetylase of Escherichia coli O127:H6 (strain E2348/69 / EPEC).